The sequence spans 247 residues: ATP synthase subunit a, chloroplastic (247 aa).

The next 5 helical transmembrane spans lie at 38-58 (QVLITSWVVITILLGSVIIAV), 95-115 (VPFIGTMFLFIFVSNWSGALL), 134-154 (INTTVALALLTSAAYFYAGLS), 199-219 (LVVVVLVSLVPLVVPIPVMFL), and 220-240 (GLFTSGIQALIFATLAAAYIG).

It belongs to the ATPase A chain family. In terms of assembly, F-type ATPases have 2 components, CF(1) - the catalytic core - and CF(0) - the membrane proton channel. CF(1) has five subunits: alpha(3), beta(3), gamma(1), delta(1), epsilon(1). CF(0) has four main subunits: a, b, b' and c.

The protein localises to the plastid. It is found in the chloroplast thylakoid membrane. Its function is as follows. Key component of the proton channel; it plays a direct role in the translocation of protons across the membrane. The protein is ATP synthase subunit a, chloroplastic of Zea mays (Maize).